Consider the following 103-residue polypeptide: c-Myc-binding protein (103 aa).

This sequence belongs to the AMY1 family. In terms of assembly, binds via its C-terminal region to the N-terminal region of MYC. Associates with AKAP1/S-AKAP84. Interacts with MYCBPAP. Interacts with CFAP91.

Its subcellular location is the cytoplasm. It is found in the nucleus. In terms of biological role, may control the transcriptional activity of MYC. Stimulates the activation of E box-dependent transcription by MYC. This Pongo abelii (Sumatran orangutan) protein is c-Myc-binding protein (MYCBP).